Reading from the N-terminus, the 508-residue chain is CBL-interacting protein kinase 19 (508 aa).

Residues 1–24 (MAATPPSSQHRRPLSSSASAASLA) form a disordered region. Positions 14–24 (LSSSASAASLA) are enriched in low complexity. The 255-residue stretch at 37-291 (YELGRLLGHG…VKEVMESRWF (255 aa)) folds into the Protein kinase domain. ATP-binding positions include 43–51 (LGHGTFAKV) and Lys66. Asp159 (proton acceptor) is an active-site residue. Positions 177-206 (DFGLSAVADQFHPDGLLHTFCGTPSYVAPE) are activation loop. The tract at residues 311 to 372 (ADGDNDMPEL…EERRQRPLGS (62 aa)) is disordered. Over residues 313–322 (GDNDMPELEP) the composition is skewed to acidic residues. The span at 323–337 (SEPPPPPPFPPPPPQ) shows a compositional bias: pro residues. A compositionally biased stretch (acidic residues) spans 338-347 (QDDDGEESGW). The 45-residue stretch at 354 to 398 (ASCPATLSSEERRQRPLGSLTRPASLNAFDIISFSKGFDLSGLFE) folds into the NAF domain. The segment at 401–430 (GSEVRFISAEPMQTIITKLEEIAKVKSFFV) is PPI.

It belongs to the protein kinase superfamily. CAMK Ser/Thr protein kinase family. SNF1 subfamily. Mn(2+) is required as a cofactor. Autophosphorylated. Expressed in roots, leaf blades and sheaths and panicles.

It carries out the reaction L-seryl-[protein] + ATP = O-phospho-L-seryl-[protein] + ADP + H(+). It catalyses the reaction L-threonyl-[protein] + ATP = O-phospho-L-threonyl-[protein] + ADP + H(+). CIPK serine-threonine protein kinases interact with CBL proteins. Binding of a CBL protein to the regulatory NAF domain of CIPK protein lead to the activation of the kinase in a calcium-dependent manner. In Oryza sativa subsp. japonica (Rice), this protein is CBL-interacting protein kinase 19 (CIPK19).